Reading from the N-terminus, the 666-residue chain is UvrABC system protein B (666 aa).

The Helicase ATP-binding domain occupies 26-183 (DSFQKGAEKV…RKLLHIQYNR (158 aa)). 39 to 46 (GVTGSGKT) contacts ATP. The Beta-hairpin motif lies at 92-115 (YYDYYQPEAYVPSSDTFIEKDSSI). Residues 429–591 (QIEDLLVEIR…ITPLTIRKEV (163 aa)) enclose the Helicase C-terminal domain. The UVR domain occupies 625–660 (EVLKDKLREEMMKAAKELDFERAAILRDKMLSIQIN).

The protein belongs to the UvrB family. Forms a heterotetramer with UvrA during the search for lesions. Interacts with UvrC in an incision complex.

It is found in the cytoplasm. Functionally, the UvrABC repair system catalyzes the recognition and processing of DNA lesions. A damage recognition complex composed of 2 UvrA and 2 UvrB subunits scans DNA for abnormalities. Upon binding of the UvrA(2)B(2) complex to a putative damaged site, the DNA wraps around one UvrB monomer. DNA wrap is dependent on ATP binding by UvrB and probably causes local melting of the DNA helix, facilitating insertion of UvrB beta-hairpin between the DNA strands. Then UvrB probes one DNA strand for the presence of a lesion. If a lesion is found the UvrA subunits dissociate and the UvrB-DNA preincision complex is formed. This complex is subsequently bound by UvrC and the second UvrB is released. If no lesion is found, the DNA wraps around the other UvrB subunit that will check the other stand for damage. The protein is UvrABC system protein B of Leptospira borgpetersenii serovar Hardjo-bovis (strain JB197).